Consider the following 103-residue polypeptide: Histone H4 (103 aa).

Gly residues predominate over residues 1–14 (MSGRGKGGKGLGKG). The disordered stretch occupies residues 1-20 (MSGRGKGGKGLGKGGAKRHR). S2 carries the post-translational modification N-acetylserine. An N6-acetyllysine modification is found at K17. The DNA-binding element occupies 17 to 21 (KRHRR). K80 carries the N6-methylated lysine modification.

This sequence belongs to the histone H4 family. In terms of assembly, the nucleosome is a histone octamer containing two molecules each of H2A, H2B, H3 and H4 assembled in one H3-H4 heterotetramer and two H2A-H2B heterodimers. The octamer wraps approximately 147 bp of DNA.

Its subcellular location is the nucleus. The protein resides in the chromosome. Functionally, core component of nucleosome. Nucleosomes wrap and compact DNA into chromatin, limiting DNA accessibility to the cellular machineries which require DNA as a template. Histones thereby play a central role in transcription regulation, DNA repair, DNA replication and chromosomal stability. DNA accessibility is regulated via a complex set of post-translational modifications of histones, also called histone code, and nucleosome remodeling. The sequence is that of Histone H4 from Olisthodiscus luteus (Marine phytoflagellate).